The following is a 1187-amino-acid chain: Nicotinate dehydrogenase subunit B (1187 aa).

A helical membrane pass occupies residues 764–784 (WWFGSLAGVFGAALGMLATAL). 3 consecutive Cytochrome c domains span residues 804–907 (AMLE…MSQT), 949–1057 (AQWN…SSLE), and 1075–1163 (VSLS…RHRF). Cys818, Cys821, His822, Cys964, Cys967, His968, Cys1088, Cys1091, and His1092 together coordinate heme c.

It depends on Mo-molybdopterin cytosine dinucleotide as a cofactor.

Its subcellular location is the membrane. The catalysed reaction is 2 Fe(III)-[cytochrome] + nicotinate + H2O = 2 Fe(II)-[cytochrome] + 6-hydroxynicotinate + 2 H(+). It functions in the pathway cofactor degradation; nicotinate degradation. In terms of biological role, subunit of the two-component enzyme NicAB that mediates nicotinate hydroxylation, the first step in the aerobic nicotinate degradation pathway. Mediates conversion of nicotinate into 6-hydroxynicotinate (6HNA). This Pseudomonas putida (strain ATCC 47054 / DSM 6125 / CFBP 8728 / NCIMB 11950 / KT2440) protein is Nicotinate dehydrogenase subunit B (nicB).